The chain runs to 280 residues: Merozoite surface protein 2 (280 aa).

The signal sequence occupies residues 1-20 (MKVIKTLSIINFFIFVTFNI). 2 N-linked (GlcNAc...) asparagine glycosylation sites follow: Asn22 and Asn36. Residues 44-206 (ANEGSNTKSV…PQTAENENPA (163 aa)) form a polymorphic region region. Residues 47-242 (GSNTKSVGAN…SQKECTDGNK (196 aa)) form a disordered region. The tract at residues 51–74 (KSVGANAPKADTIASGSQSSTNSA) is 5 X 12 AA tandem repeats of P-P-I-T-T-T-E-S-N-S-R-S. The segment covering 64–98 (ASGSQSSTNSASTSTTNNGESQTTTPTAADTPTAT) has biased composition (low complexity). The span at 99–149 (ESNSRSPPITTTESNSRSPPITTTESNSRSPPITTTESNSRSPPITTTESN) shows a compositional bias: polar residues. 4 repeat units span residues 105–116 (PPITTTESNSRS), 117–128 (PPITTTESNSRS), 129–140 (PPITTTESNSRS), and 141–152 (PPITTTESNSRS). Residues 150-163 (SRSPPITTTESSSS) are compositionally biased toward low complexity. The 5; partial repeat unit spans residues 153–160 (PPITTTES). Asn168 carries an N-linked (GlcNAc...) asparagine glycan. Positions 170–182 (TDGKGEESEKQNE) are enriched in basic and acidic residues. 2 N-linked (GlcNAc...) asparagine glycosylation sites follow: Asn184 and Asn229. Positions 233-242 (SQKECTDGNK) are enriched in basic and acidic residues. A disulfide bridge links Cys237 with Cys245. N-linked (GlcNAc...) asparagine glycosylation is found at Asn253 and Asn254. Asn254 carries the GPI-anchor amidated asparagine lipid modification. Residues 255-280 (SSNIASINKFVVLISATLVLSFAIFI) constitute a propeptide, removed in mature form.

Its subcellular location is the cell membrane. Its function is as follows. May play a role in the merozoite attachment to the erythrocyte. The protein is Merozoite surface protein 2 of Plasmodium falciparum (isolate K1 / Thailand).